We begin with the raw amino-acid sequence, 457 residues long: Phosphoglucosamine mutase (457 aa).

Residue S106 is the Phosphoserine intermediate of the active site. Residues S106, D245, D247, and D249 each contribute to the Mg(2+) site. A Phosphoserine modification is found at S106.

Belongs to the phosphohexose mutase family. Mg(2+) is required as a cofactor. In terms of processing, activated by phosphorylation.

It catalyses the reaction alpha-D-glucosamine 1-phosphate = D-glucosamine 6-phosphate. Catalyzes the conversion of glucosamine-6-phosphate to glucosamine-1-phosphate. In Methylibium petroleiphilum (strain ATCC BAA-1232 / LMG 22953 / PM1), this protein is Phosphoglucosamine mutase.